We begin with the raw amino-acid sequence, 487 residues long: Probable cytochrome P450 516A1 (487 aa).

A helical membrane pass occupies residues 1–21 (MIILLLSIIIFILYIVKIFKN). Cysteine 434 serves as a coordination point for heme.

It belongs to the cytochrome P450 family. The cofactor is heme.

Its subcellular location is the membrane. The protein is Probable cytochrome P450 516A1 (cyp516A1) of Dictyostelium discoideum (Social amoeba).